We begin with the raw amino-acid sequence, 47 residues long: PhoP/PhoQ regulator MgrB (47 aa).

Residues W6–V26 form a helical membrane-spanning segment.

This sequence belongs to the MgrB family. In terms of assembly, may form homooligomers. Probably interacts with the periplasmic domain of PhoQ.

The protein resides in the cell inner membrane. In terms of biological role, phoP-regulated transcription is redox-sensitive, being activated when the periplasm becomes more reducing. MgrB acts between DsbA/DsbB and PhoP/PhoQ in this pathway. Represses PhoP/PhoQ signaling, possibly by binding to the periplasmic domain of PhoQ, altering its activity and that of downstream effector PhoP. The polypeptide is PhoP/PhoQ regulator MgrB (Cronobacter sakazakii (strain ATCC BAA-894) (Enterobacter sakazakii)).